A 436-amino-acid chain; its full sequence is Serine--tRNA ligase (436 aa).

An L-serine-binding site is contributed by 239 to 241; it reads TAE. An ATP-binding site is contributed by 270-272; that stretch reads RKE. Position 293 (glutamate 293) interacts with L-serine. 357-360 contacts ATP; that stretch reads EISS. Serine 392 contacts L-serine.

The protein belongs to the class-II aminoacyl-tRNA synthetase family. Type-1 seryl-tRNA synthetase subfamily. In terms of assembly, homodimer. The tRNA molecule binds across the dimer.

Its subcellular location is the cytoplasm. It carries out the reaction tRNA(Ser) + L-serine + ATP = L-seryl-tRNA(Ser) + AMP + diphosphate + H(+). It catalyses the reaction tRNA(Sec) + L-serine + ATP = L-seryl-tRNA(Sec) + AMP + diphosphate + H(+). The protein operates within aminoacyl-tRNA biosynthesis; selenocysteinyl-tRNA(Sec) biosynthesis; L-seryl-tRNA(Sec) from L-serine and tRNA(Sec): step 1/1. In terms of biological role, catalyzes the attachment of serine to tRNA(Ser). Is also able to aminoacylate tRNA(Sec) with serine, to form the misacylated tRNA L-seryl-tRNA(Sec), which will be further converted into selenocysteinyl-tRNA(Sec). The protein is Serine--tRNA ligase of Leuconostoc citreum (strain KM20).